The following is a 65-amino-acid chain: Large ribosomal subunit protein uL29 (65 aa).

Belongs to the universal ribosomal protein uL29 family.

The sequence is that of Large ribosomal subunit protein uL29 from Xylella fastidiosa (strain Temecula1 / ATCC 700964).